The chain runs to 296 residues: Sulfotransferase 1C2 (296 aa).

Residue 49 to 54 (KSGTTW) participates in 3'-phosphoadenylyl sulfate binding. Position 107-109 (107-109 (RTH)) interacts with substrate. The active-site Proton acceptor is the histidine 109. Residues arginine 131, serine 139, tyrosine 194, and 228-233 (TSFEKM) each bind 3'-phosphoadenylyl sulfate. The residue at position 139 (serine 139) is a Phosphoserine. Serine 254 is modified (phosphoserine). 3'-phosphoadenylyl sulfate is bound at residue 256–260 (FMRKG).

It belongs to the sulfotransferase 1 family. Highly expressed in kidney and at lower levels in stomach and liver. More specifically found in the epithelia of proximal tubules of the kidney, of the bile duct, of the gastric mucosa, and in hepatocytes.

Its subcellular location is the cytoplasm. The protein resides in the lysosome. The protein localises to the mitochondrion. It carries out the reaction a phenol + 3'-phosphoadenylyl sulfate = an aryl sulfate + adenosine 3',5'-bisphosphate + H(+). It catalyses the reaction cholesterol + 3'-phosphoadenylyl sulfate = cholesterol sulfate + adenosine 3',5'-bisphosphate + H(+). Functionally, sulfotransferase that utilizes 3'-phospho-5'-adenylyl sulfate (PAPS) to catalyze the sulfate conjugation of phenolic compounds. Does not transfer sulfate to steroids, dopamine, acetaminophen, or alpha-naphthol. Except in mitochondria, where it can add sulfate to cholesterol producing cholesterol sulfate, which alters mitochondrial membrane organization, and impacts protein complex mobility increasing state-III respiration, thereby modulating mitochondrial respiration. Catalyzes the sulfation of the carcinogenic N-hydroxy-2-acetylaminofluorene leading to highly reactive intermediates capable of forming DNA adducts, potentially resulting in mutagenesis. This chain is Sulfotransferase 1C2 (Sult1c2), found in Rattus norvegicus (Rat).